An 89-amino-acid polypeptide reads, in one-letter code: MALEKEEKSQIINGYQIHETDTGSPEVQVALLTERINQLIEHLRVHTHDHHSRRGLLKLVGRRRRLLNYLQSKDRERYRNVINRLGLRR.

It belongs to the universal ribosomal protein uS15 family. Part of the 30S ribosomal subunit. Forms a bridge to the 50S subunit in the 70S ribosome, contacting the 23S rRNA.

One of the primary rRNA binding proteins, it binds directly to 16S rRNA where it helps nucleate assembly of the platform of the 30S subunit by binding and bridging several RNA helices of the 16S rRNA. In terms of biological role, forms an intersubunit bridge (bridge B4) with the 23S rRNA of the 50S subunit in the ribosome. This Chloroflexus aurantiacus (strain ATCC 29366 / DSM 635 / J-10-fl) protein is Small ribosomal subunit protein uS15.